The chain runs to 347 residues: N-acetyl-gamma-glutamyl-phosphate reductase (347 aa).

C151 is a catalytic residue.

It belongs to the NAGSA dehydrogenase family. Type 1 subfamily.

It is found in the cytoplasm. It catalyses the reaction N-acetyl-L-glutamate 5-semialdehyde + phosphate + NADP(+) = N-acetyl-L-glutamyl 5-phosphate + NADPH + H(+). The protein operates within amino-acid biosynthesis; L-arginine biosynthesis; N(2)-acetyl-L-ornithine from L-glutamate: step 3/4. Its function is as follows. Catalyzes the NADPH-dependent reduction of N-acetyl-5-glutamyl phosphate to yield N-acetyl-L-glutamate 5-semialdehyde. This Pelotomaculum thermopropionicum (strain DSM 13744 / JCM 10971 / SI) protein is N-acetyl-gamma-glutamyl-phosphate reductase.